The chain runs to 442 residues: tRNA-2-methylthio-N(6)-dimethylallyladenosine synthase (442 aa).

An MTTase N-terminal domain is found at 2–117 (QGLYIKSYGC…LPELIIKARR (116 aa)). Residues Cys-11, Cys-47, Cys-80, Cys-157, Cys-161, and Cys-164 each coordinate [4Fe-4S] cluster. Residues 143 to 374 (KNQEVSAFIS…QELLREQQLA (232 aa)) enclose the Radical SAM core domain. A TRAM domain is found at 377-442 (RNMIGQTCSV…QNSVTGIVVN (66 aa)).

This sequence belongs to the methylthiotransferase family. MiaB subfamily. In terms of assembly, monomer. The cofactor is [4Fe-4S] cluster.

It is found in the cytoplasm. The enzyme catalyses N(6)-dimethylallyladenosine(37) in tRNA + (sulfur carrier)-SH + AH2 + 2 S-adenosyl-L-methionine = 2-methylsulfanyl-N(6)-dimethylallyladenosine(37) in tRNA + (sulfur carrier)-H + 5'-deoxyadenosine + L-methionine + A + S-adenosyl-L-homocysteine + 2 H(+). Functionally, catalyzes the methylthiolation of N6-(dimethylallyl)adenosine (i(6)A), leading to the formation of 2-methylthio-N6-(dimethylallyl)adenosine (ms(2)i(6)A) at position 37 in tRNAs that read codons beginning with uridine. This chain is tRNA-2-methylthio-N(6)-dimethylallyladenosine synthase, found in Ehrlichia chaffeensis (strain ATCC CRL-10679 / Arkansas).